The chain runs to 133 residues: MWNEFKKFAFKGNVIDLAVGVVIGAAFGKIVSSLVKDIITPLLGMVLGGVNFTDLKLTFGKSSIMYGNFIQTIFDFLIIAAAIFMFVKVFNKLTSKREEEEKKEELPEPTKEEEILGEIRDLLKQQNSSKDRA.

Helical transmembrane passes span 14-34 (VIDL…VSSL) and 67-87 (GNFI…FMFV).

The protein belongs to the MscL family. Homopentamer.

The protein resides in the cell membrane. Functionally, channel that opens in response to stretch forces in the membrane lipid bilayer. May participate in the regulation of osmotic pressure changes within the cell. This chain is Large-conductance mechanosensitive channel, found in Bacillus mycoides (strain KBAB4) (Bacillus weihenstephanensis).